The chain runs to 936 residues: ABC transporter A family member 5 (936 aa).

7 helical membrane-spanning segments follow: residues L34–T54, A340–L360, F393–L413, S422–V442, V454–L474, W484–Y501, and A527–Y547. In terms of domain architecture, ABC transporter spans I614–T851. G652–T659 contributes to the ATP binding site.

Belongs to the ABC transporter superfamily. ABCA family. CPR flippase (TC 3.A.1.211) subfamily.

Its subcellular location is the membrane. This Arabidopsis thaliana (Mouse-ear cress) protein is ABC transporter A family member 5 (ABCA5).